We begin with the raw amino-acid sequence, 514 residues long: 2-isopropylmalate synthase (514 aa).

Residues 5-268 (LIIFDTTLRD…DVGLDTTQIV (264 aa)) form the Pyruvate carboxyltransferase domain. Mn(2+) contacts are provided by Asp14, His202, His204, and Asn239. The interval 395–514 (KFVSLSQRSE…KDDKLNPQRS (120 aa)) is regulatory domain.

Belongs to the alpha-IPM synthase/homocitrate synthase family. LeuA type 1 subfamily. As to quaternary structure, homodimer. Mn(2+) is required as a cofactor.

It localises to the cytoplasm. The enzyme catalyses 3-methyl-2-oxobutanoate + acetyl-CoA + H2O = (2S)-2-isopropylmalate + CoA + H(+). The protein operates within amino-acid biosynthesis; L-leucine biosynthesis; L-leucine from 3-methyl-2-oxobutanoate: step 1/4. Catalyzes the condensation of the acetyl group of acetyl-CoA with 3-methyl-2-oxobutanoate (2-ketoisovalerate) to form 3-carboxy-3-hydroxy-4-methylpentanoate (2-isopropylmalate). This chain is 2-isopropylmalate synthase, found in Burkholderia ambifaria (strain ATCC BAA-244 / DSM 16087 / CCUG 44356 / LMG 19182 / AMMD) (Burkholderia cepacia (strain AMMD)).